The sequence spans 228 residues: Triosephosphate isomerase (228 aa).

Residue 9–11 (NFK) participates in substrate binding. The Electrophile role is filled by His93. The active-site Proton acceptor is Glu141. Substrate-binding positions include Ile146, Gly180, and 201-202 (AS).

The protein belongs to the triosephosphate isomerase family. Homotetramer; dimer of dimers.

It localises to the cytoplasm. The catalysed reaction is D-glyceraldehyde 3-phosphate = dihydroxyacetone phosphate. It functions in the pathway carbohydrate biosynthesis; gluconeogenesis. The protein operates within carbohydrate degradation; glycolysis; D-glyceraldehyde 3-phosphate from glycerone phosphate: step 1/1. Functionally, involved in the gluconeogenesis. Catalyzes stereospecifically the conversion of dihydroxyacetone phosphate (DHAP) to D-glyceraldehyde-3-phosphate (G3P). This is Triosephosphate isomerase from Metallosphaera sedula (strain ATCC 51363 / DSM 5348 / JCM 9185 / NBRC 15509 / TH2).